The chain runs to 277 residues: Energy-coupling factor transporter ATP-binding protein EcfA1 (277 aa).

An ABC transporter domain is found at 5-242 (VKVNNISFEY…IKMLKEIGLD (238 aa)). 41–48 (GHNGSGKS) contacts ATP.

This sequence belongs to the ABC transporter superfamily. Energy-coupling factor EcfA family. As to quaternary structure, forms a stable energy-coupling factor (ECF) transporter complex composed of 2 membrane-embedded substrate-binding proteins (S component), 2 ATP-binding proteins (A component) and 2 transmembrane proteins (T component).

It is found in the cell membrane. Functionally, ATP-binding (A) component of a common energy-coupling factor (ECF) ABC-transporter complex. Unlike classic ABC transporters this ECF transporter provides the energy necessary to transport a number of different substrates. The sequence is that of Energy-coupling factor transporter ATP-binding protein EcfA1 from Clostridioides difficile (strain 630) (Peptoclostridium difficile).